Consider the following 84-residue polypeptide: MYB-like transcription factor TCL1 (84 aa).

One can recognise a Myb-like domain in the interval 36-73; sequence TEQEEDLIFRMYRLVGDRWDLIARRVVGREAKEIERYW.

As to expression, expressed in inflorescences and trichomes of rosette and cauline leaves.

It is found in the nucleus. Its function is as follows. MYB-type transcription factor involved in trichome cell specification. Acts as a negative regulator of trichome patterning and formation by direct binding to the cis-acting regulatory elements of GL1, thus suppressing the expression of GL1. This chain is MYB-like transcription factor TCL1 (TCL1), found in Arabidopsis thaliana (Mouse-ear cress).